The primary structure comprises 186 residues: Ribosome-recycling factor (186 aa).

The protein belongs to the RRF family.

The protein resides in the cytoplasm. Functionally, responsible for the release of ribosomes from messenger RNA at the termination of protein biosynthesis. May increase the efficiency of translation by recycling ribosomes from one round of translation to another. This chain is Ribosome-recycling factor, found in Azorhizobium caulinodans (strain ATCC 43989 / DSM 5975 / JCM 20966 / LMG 6465 / NBRC 14845 / NCIMB 13405 / ORS 571).